A 513-amino-acid chain; its full sequence is MSTPTAADRAKALERKNEGNVFVKEKHFLKAIEKYTEAIDLDSTQSIYFSNRAFAHFKVDNFQSALNDCDEAIKLDPKNIKAYHRRALSCMALLEFKKARKDLNVLLKAKPNDPAATKALLTCDRFIREERFRKAIGGAENEAKISLCQTLNLSSFDANADLANYEGPKLEFEQLYDDKNAFKGAKIKNMSQEFISKMVNDLFLKGKYLPKKYVAAIISHADTLFRQEPSMVELENNSTPDVKISVCGDTHGQFYDVLNLFRKFGKVGPKHTYLFNGDFVDRGSWSCEVALLFYCLKILHPNNFFLNRGNHESDNMNKIYGFEDECKYKYSQRIFNMFAQSFESLPLATLINNDYLVMHGGLPSDPSATLSDFKNIDRFAQPPRDGAFMELLWADPQEANGMGPSQRGLGHAFGPDITDRFLRNNKLRKIFRSHELRMGGVQFEQKGKLMTVFSAPNYCDSQGNLGGVIHVVPGHGILQAGRNDDQNLIIETFEAVEHPDIKPMAYSNGGFGL.

3 TPR repeats span residues 12-45, 46-79, and 80-113; these read ALERKNEGNVFVKEKHFLKAIEKYTEAIDLDSTQ, SIYFSNRAFAHFKVDNFQSALNDCDEAIKLDPKN, and IKAYHRRALSCMALLEFKKARKDLNVLLKAKPND. The catalytic stretch occupies residues 188–513; that stretch reads KNMSQEFISK…MAYSNGGFGL (326 aa). Mn(2+)-binding residues include Asp-249, His-251, Asp-278, and Asn-310. The Proton donor/acceptor role is filled by His-311. Mn(2+) is bound by residues His-359 and His-434.

This sequence belongs to the PPP phosphatase family. PP-5 (PP-T) subfamily. As to quaternary structure, interacts (via TPR repeats) with HSP82 (via C-terminal MEEVD pentapeptide). Mg(2+) serves as cofactor. Requires Mn(2+) as cofactor.

The protein localises to the nucleus. It catalyses the reaction O-phospho-L-seryl-[protein] + H2O = L-seryl-[protein] + phosphate. The catalysed reaction is O-phospho-L-threonyl-[protein] + H2O = L-threonyl-[protein] + phosphate. With respect to regulation, stimulated by arachidonic acid and other unsaturated fatty acids, and by arachidoyl coenzyme A. Protein phosphatase that specifically binds to and dephosphorylates the molecular chaperone Hsp90 (HSC82 and HSP82). Dephosphorylation positively regulates the Hsp90 chaperone machinery. The chain is Serine/threonine-protein phosphatase T (PPT1) from Saccharomyces cerevisiae (strain ATCC 204508 / S288c) (Baker's yeast).